The following is a 192-amino-acid chain: Superoxide dismutase [Fe] (192 aa).

Positions 27, 74, 157, and 161 each coordinate Fe cation.

The protein belongs to the iron/manganese superoxide dismutase family. Homodimer. Fe cation is required as a cofactor.

The enzyme catalyses 2 superoxide + 2 H(+) = H2O2 + O2. Functionally, destroys superoxide anion radicals which are normally produced within the cells and which are toxic to biological systems. The polypeptide is Superoxide dismutase [Fe] (sodB) (Bordetella pertussis (strain Tohama I / ATCC BAA-589 / NCTC 13251)).